Consider the following 214-residue polypeptide: External core antigen (214 aa).

Residues 1–19 form the signal peptide; the sequence is MQLFHLCLIISCTCPTVQA. Positions 25–27 are HBEAG; that stretch reads GWL. The interval 165–214 is disordered; it reads NAPILSTLPETTVVRRRDRGRSPRRRTPSPRRRRSQSPRRRRSQSRESQC. The segment covering 178–207 has biased composition (basic residues); that stretch reads VRRRDRGRSPRRRTPSPRRRRSQSPRRRRS. One copy of the 1; half-length repeat lies at 186 to 192; it reads SPRRRTP. Positions 186-208 are 3 X 8 AA repeats of S-P-R-R-R-R-S-Q; sequence SPRRRTPSPRRRRSQSPRRRRSQ. The propeptide occupies 186-214; sequence SPRRRTPSPRRRRSQSPRRRRSQSRESQC. 2 consecutive repeat copies span residues 193–200 and 201–208.

The protein belongs to the orthohepadnavirus precore antigen family. As to quaternary structure, homodimerizes. Post-translationally, phosphorylated. Cleaved by host furin.

It localises to the secreted. It is found in the host nucleus. In terms of biological role, may regulate immune response to the intracellular capsid in acting as a T-cell tolerogen, by having an immunoregulatory effect which prevents destruction of infected cells by cytotoxic T-cells. This immune regulation may predispose to chronicity during perinatal infections and prevent severe liver injury during adult infections. This is External core antigen from Homo sapiens (Human).